The following is a 158-amino-acid chain: Tryptophan-rich sensory protein (158 aa).

5 helical membrane passes run 5-25 (WALFLTFLAACGAPATTGALL), 44-65 (WVFPLAWTSLYFLMSLAAMRVA), 73-93 (ALAFYAAQLAFNTLWTPVFFG), 97-119 (MATALAVVMVMWLFVAATMWAFF), and 124-144 (WAGVLFVPYLIWATAATGLNF).

Belongs to the TspO/BZRP family. Homodimer.

The protein localises to the membrane. It is found in the cell inner membrane. In terms of biological role, may play a role in the transmembrane transport of tetrapyrroles and similar compounds, and thereby contribute to the regulation of tetrapyrrole biosynthesis. Binds tetrapyrroles and promotes the photooxidative degradation of protoporphyrin IX. Binds protoporphyrin IX, hemin, and coproporphyrin III, but does not bind delta-aminolevulinic acid. Can bind bilirubin, curcumin, gossypol, retinoic acid, cholesterol and the benzodiazepine receptor agonist PK-11195 (in vitro). Plays a role in the response to low oxygen levels and in the regulation of the biosynthesis of photosynthetic pigments. This is Tryptophan-rich sensory protein from Cereibacter sphaeroides (Rhodobacter sphaeroides).